The chain runs to 581 residues: DEAD-box ATP-dependent RNA helicase 22 (581 aa).

Residues 80–108 (VSWKSLGLSDNVSIALRDSGFDRPSLTQA) carry the Q motif motif. Positions 111–380 (IPSILSGKDV…GGILKHMFQD (270 aa)) constitute a Helicase ATP-binding domain. 124 to 131 (AETGSGKT) contacts ATP. Residues 244-247 (DEAD) carry the DEAD box motif. The region spanning 408-566 (QVDALIEAVK…GFRNKVKKRA (159 aa)) is the Helicase C-terminal domain.

Belongs to the DEAD box helicase family.

It catalyses the reaction ATP + H2O = ADP + phosphate + H(+). The chain is DEAD-box ATP-dependent RNA helicase 22 (RH22) from Arabidopsis thaliana (Mouse-ear cress).